Here is a 378-residue protein sequence, read N- to C-terminus: Chaperone protein DnaJ (378 aa).

Positions 6-70 (DYYDVLGVSR…QKRQQYDQFG (65 aa)) constitute a J domain. Residues 137 to 219 (GKTSEISYSR…CHGKGVKTQK (83 aa)) form a CR-type zinc finger. 8 residues coordinate Zn(2+): cysteine 150, cysteine 153, cysteine 167, cysteine 170, cysteine 193, cysteine 196, cysteine 207, and cysteine 210. 4 CXXCXGXG motif repeats span residues 150–157 (CEVCKGSG), 167–174 (CDKCGGSG), 193–200 (CDKCTGSG), and 207–214 (CHNCHGKG).

The protein belongs to the DnaJ family. As to quaternary structure, homodimer. Zn(2+) serves as cofactor.

The protein localises to the cytoplasm. Its function is as follows. Participates actively in the response to hyperosmotic and heat shock by preventing the aggregation of stress-denatured proteins and by disaggregating proteins, also in an autonomous, DnaK-independent fashion. Unfolded proteins bind initially to DnaJ; upon interaction with the DnaJ-bound protein, DnaK hydrolyzes its bound ATP, resulting in the formation of a stable complex. GrpE releases ADP from DnaK; ATP binding to DnaK triggers the release of the substrate protein, thus completing the reaction cycle. Several rounds of ATP-dependent interactions between DnaJ, DnaK and GrpE are required for fully efficient folding. Also involved, together with DnaK and GrpE, in the DNA replication of plasmids through activation of initiation proteins. This is Chaperone protein DnaJ from Lactobacillus delbrueckii subsp. bulgaricus (strain ATCC 11842 / DSM 20081 / BCRC 10696 / JCM 1002 / NBRC 13953 / NCIMB 11778 / NCTC 12712 / WDCM 00102 / Lb 14).